The following is a 208-amino-acid chain: Small ribosomal subunit protein uS4 (208 aa).

One can recognise an S4 RNA-binding domain in the interval 98–158 (CRLDTVSYRM…EKAKNHLRIK (61 aa)).

Belongs to the universal ribosomal protein uS4 family. In terms of assembly, part of the 30S ribosomal subunit. Contacts protein S5. The interaction surface between S4 and S5 is involved in control of translational fidelity.

Functionally, one of the primary rRNA binding proteins, it binds directly to 16S rRNA where it nucleates assembly of the body of the 30S subunit. In terms of biological role, with S5 and S12 plays an important role in translational accuracy. The sequence is that of Small ribosomal subunit protein uS4 from Nitrosospira multiformis (strain ATCC 25196 / NCIMB 11849 / C 71).